We begin with the raw amino-acid sequence, 207 residues long: Urease accessory protein UreG (207 aa).

A GTP-binding site is contributed by 14 to 21 (GPVGSGKT).

The protein belongs to the SIMIBI class G3E GTPase family. UreG subfamily. As to quaternary structure, homodimer. UreD, UreF and UreG form a complex that acts as a GTP-hydrolysis-dependent molecular chaperone, activating the urease apoprotein by helping to assemble the nickel containing metallocenter of UreC. The UreE protein probably delivers the nickel.

The protein resides in the cytoplasm. Facilitates the functional incorporation of the urease nickel metallocenter. This process requires GTP hydrolysis, probably effectuated by UreG. This Pseudomonas entomophila (strain L48) protein is Urease accessory protein UreG.